A 121-amino-acid chain; its full sequence is Large ribosomal subunit protein bL12 (121 aa).

This sequence belongs to the bacterial ribosomal protein bL12 family. Homodimer. Part of the ribosomal stalk of the 50S ribosomal subunit. Forms a multimeric L10(L12)X complex, where L10 forms an elongated spine to which 2 to 4 L12 dimers bind in a sequential fashion. Binds GTP-bound translation factors.

Its function is as follows. Forms part of the ribosomal stalk which helps the ribosome interact with GTP-bound translation factors. Is thus essential for accurate translation. This Streptococcus suis (strain 98HAH33) protein is Large ribosomal subunit protein bL12.